The chain runs to 237 residues: Probable aquaporin SIP2-1 (237 aa).

6 consecutive transmembrane segments (helical) span residues Phe-15–Ser-35, Pro-39–Leu-59, Leu-71–Val-91, Val-122–Ser-142, Ile-169–Tyr-189, and Val-202–Phe-222. An NPA 1 motif is present at residues Asn-69–Leu-71. The NPA 2 signature appears at Asn-180–Ala-182.

This sequence belongs to the MIP/aquaporin (TC 1.A.8) family. SIP (TC 1.A.8.10) subfamily. In terms of tissue distribution, expressed in dividing cells and elongating regions of the root tips, emerging lateral roots, root steles, cotyledons, main veins of the rosette leaves, vascular tissues of the flower petals, stigma, stamens (anthers and filaments), pollen and the top and bottom (receptacle) of siliques.

Its subcellular location is the endoplasmic reticulum membrane. Functionally, water channel required to facilitate the transport of water across cell membrane. Inactive in yeast cells. The sequence is that of Probable aquaporin SIP2-1 (SIP2-1) from Arabidopsis thaliana (Mouse-ear cress).